The sequence spans 398 residues: tRNA-specific 2-thiouridylase MnmA (398 aa).

ATP is bound by residues 19 to 26 (AMSGGVDS) and L45. Residue C113 is the Nucleophile of the active site. A disulfide bond links C113 and C210. G137 contributes to the ATP binding site. Residues 160–162 (RDQ) form an interaction with tRNA region. Catalysis depends on C210, which acts as the Cysteine persulfide intermediate.

It belongs to the MnmA/TRMU family.

The protein resides in the cytoplasm. The catalysed reaction is S-sulfanyl-L-cysteinyl-[protein] + uridine(34) in tRNA + AH2 + ATP = 2-thiouridine(34) in tRNA + L-cysteinyl-[protein] + A + AMP + diphosphate + H(+). In terms of biological role, catalyzes the 2-thiolation of uridine at the wobble position (U34) of tRNA, leading to the formation of s(2)U34. This Rhodopseudomonas palustris (strain BisB5) protein is tRNA-specific 2-thiouridylase MnmA.